The chain runs to 237 residues: MLTRKQQELLLFIHERLKDGGVSPSFDEMKDALGLKSKSGIHRLITGLEERGFIRRLPHRARALEVLRLPEQPAPLRVAPRTEEPVRFRPNVIRGDFRGALPGREARGDAEAVSLPLYGRIAAGLPIEALRDTTASIDVPTGLIASGEHYALEVAGDSMVDAGILDGDTVIIQRCETAENGTVIVALVDDNEVTLKRLRRKGNSIALEPANPAYETRVFGADRVRIQGRLVGLIRRY.

Positions 26 to 46 (FDEMKDALGLKSKSGIHRLIT) form a DNA-binding region, H-T-H motif. Active-site for autocatalytic cleavage activity residues include S158 and K196.

The protein belongs to the peptidase S24 family. As to quaternary structure, homodimer.

It catalyses the reaction Hydrolysis of Ala-|-Gly bond in repressor LexA.. Functionally, represses a number of genes involved in the response to DNA damage (SOS response), including recA and lexA. In the presence of single-stranded DNA, RecA interacts with LexA causing an autocatalytic cleavage which disrupts the DNA-binding part of LexA, leading to derepression of the SOS regulon and eventually DNA repair. This is LexA repressor from Rhodospirillum centenum (strain ATCC 51521 / SW).